A 279-amino-acid chain; its full sequence is Putative colanic acid biosynthesis glycosyl transferase WcaA (279 aa).

It to R.meliloti ExoO.

The protein operates within slime biogenesis; slime polysaccharide biosynthesis. This is Putative colanic acid biosynthesis glycosyl transferase WcaA (wcaA) from Escherichia coli (strain K12).